The following is a 373-amino-acid chain: MKSKNTPLYETCLNEGARMVEFAGWNMPIQFSGLINEHNAVRKNSGIFDISHMGVFSIQGKNPKDALQTLVPSDLHRIGPGEACYTVLLNNDGGIIDDLIVYDLGTNDPNNEECILIVINAGCTQADIDWIKEHLSDKNLKVCNAKGDGVLLALQGPDSTNQLRNVLGESLTNIPKFGHREIQVQLKTHPVSFSIFIARTGYTGEDGYEILLNTNAGKSLWRELIENGVTPCGLGARDTLRLEAGMPLYGNDINNTTTPFEAGLGWLVHLETPDEFIGKAALVKQTNEGINKKLVALKIEGRAIARKGYQIMFKNKFVGEITSGSWSPTLNEGIALAYLPIDLTKIGTAVSVQIRDKLHTAIVAKKPFYRRVS.

Belongs to the GcvT family. In terms of assembly, the glycine cleavage system is composed of four proteins: P, T, L and H.

The enzyme catalyses N(6)-[(R)-S(8)-aminomethyldihydrolipoyl]-L-lysyl-[protein] + (6S)-5,6,7,8-tetrahydrofolate = N(6)-[(R)-dihydrolipoyl]-L-lysyl-[protein] + (6R)-5,10-methylene-5,6,7,8-tetrahydrofolate + NH4(+). The glycine cleavage system catalyzes the degradation of glycine. This Prochlorococcus marinus (strain SARG / CCMP1375 / SS120) protein is Aminomethyltransferase.